Consider the following 373-residue polypeptide: Dual-specificity RNA methyltransferase RlmN (373 aa).

The active-site Proton acceptor is the E104. A Radical SAM core domain is found at 110–349; sequence KNQRTTLCIS…VTIRKIRGYD (240 aa). The cysteines at positions 117 and 354 are disulfide-linked. [4Fe-4S] cluster contacts are provided by C124, C128, and C131. Residues 178–179, S210, 232–234, and N311 each bind S-adenosyl-L-methionine; these read GE and SLH. C354 acts as the S-methylcysteine intermediate in catalysis.

Belongs to the radical SAM superfamily. RlmN family. [4Fe-4S] cluster serves as cofactor.

The protein localises to the cytoplasm. The enzyme catalyses adenosine(2503) in 23S rRNA + 2 reduced [2Fe-2S]-[ferredoxin] + 2 S-adenosyl-L-methionine = 2-methyladenosine(2503) in 23S rRNA + 5'-deoxyadenosine + L-methionine + 2 oxidized [2Fe-2S]-[ferredoxin] + S-adenosyl-L-homocysteine. The catalysed reaction is adenosine(37) in tRNA + 2 reduced [2Fe-2S]-[ferredoxin] + 2 S-adenosyl-L-methionine = 2-methyladenosine(37) in tRNA + 5'-deoxyadenosine + L-methionine + 2 oxidized [2Fe-2S]-[ferredoxin] + S-adenosyl-L-homocysteine. Functionally, specifically methylates position 2 of adenine 2503 in 23S rRNA and position 2 of adenine 37 in tRNAs. m2A2503 modification seems to play a crucial role in the proofreading step occurring at the peptidyl transferase center and thus would serve to optimize ribosomal fidelity. The sequence is that of Dual-specificity RNA methyltransferase RlmN from Buchnera aphidicola subsp. Baizongia pistaciae (strain Bp).